A 266-amino-acid chain; its full sequence is Hydroxyethylthiazole kinase (266 aa).

Met-46 lines the substrate pocket. Positions 122 and 166 each coordinate ATP. Gly-193 lines the substrate pocket.

It belongs to the Thz kinase family. It depends on Mg(2+) as a cofactor.

The catalysed reaction is 5-(2-hydroxyethyl)-4-methylthiazole + ATP = 4-methyl-5-(2-phosphooxyethyl)-thiazole + ADP + H(+). It participates in cofactor biosynthesis; thiamine diphosphate biosynthesis; 4-methyl-5-(2-phosphoethyl)-thiazole from 5-(2-hydroxyethyl)-4-methylthiazole: step 1/1. Catalyzes the phosphorylation of the hydroxyl group of 4-methyl-5-beta-hydroxyethylthiazole (THZ). This chain is Hydroxyethylthiazole kinase, found in Caldivirga maquilingensis (strain ATCC 700844 / DSM 13496 / JCM 10307 / IC-167).